The following is a 60-amino-acid chain: Waprin-Lio1 (60 aa).

The first 8 residues, 1-8 (MLLGTTSA), serve as a signal peptide directing secretion. A WAP domain is found at 9–59 (QVVRPGSCPNVDVPIPPLGLCRTTCQTDANCQEGRKCCKNGCGFMTCETAR). Cystine bridges form between Cys16/Cys46, Cys29/Cys50, Cys33/Cys45, and Cys39/Cys55.

This sequence belongs to the venom waprin family. In terms of tissue distribution, expressed by the venom gland.

The protein resides in the secreted. Damages membranes of susceptible bacteria. Has no hemolytic activity. Not toxic to mice. Does not inhibit the proteinases elastase and cathepsin G. The sequence is that of Waprin-Lio1 from Erythrolamprus poecilogyrus (Water snake).